The following is a 366-amino-acid chain: uncharacterized protein (366 aa).

This is an uncharacterized protein from Methanocaldococcus jannaschii (strain ATCC 43067 / DSM 2661 / JAL-1 / JCM 10045 / NBRC 100440) (Methanococcus jannaschii).